The chain runs to 549 residues: TBC1 domain family member 3G (549 aa).

Residues 101 to 293 (GMPMNIRGPM…RLWDVYLVEG (193 aa)) enclose the Rab-GAP TBC domain. Residues Cys-318 and Cys-325 are each lipidated (S-palmitoyl cysteine). Disordered stretches follow at residues 350–443 (LTRK…QGGP) and 507–526 (AAPSTDSDQGTPFRARDEQQ). The span at 398–417 (PRPIWSASPPRAPRSSTPCP) shows a compositional bias: low complexity.

In terms of processing, ubiquitinated by a CUL7-based E3 ligase, which leads to proteasomal degradation. Palmitoylation is required for membrane localization and protects TBC1D3 from ubiquitination.

The protein localises to the cell membrane. In terms of biological role, acts as a GTPase activating protein for RAB5. Does not act on RAB4 or RAB11. The polypeptide is TBC1 domain family member 3G (TBC1D3G) (Homo sapiens (Human)).